A 220-amino-acid chain; its full sequence is MKTGALATFLALCLPVTVFATTLRLSNEVDLLVLDGKKVSSSLLRGAESIELENGPHQLVFRVEKTIRLPGNEERLYISPPLVISFDTQLISQVNFQLPRLENEREASHFNAAPRLALLDGDAMPIPVKLDILAITSTAKVVDYEIETERYNKSAKRASLPQFATMMADDSTLLSDVSELDTVPPQSQTLTEQRLKYWFRLADPQTRHHFLQWAEKQPPS.

The signal sequence occupies residues 1–20 (MKTGALATFLALCLPVTVFA).

It belongs to the UPF0319 family.

The protein is UPF0319 protein YccT of Salmonella enteritidis PT4 (strain P125109).